Reading from the N-terminus, the 214-residue chain is External core antigen (214 aa).

Residues 1–19 form the signal peptide; it reads MQLFHLCLIISCTCPTIQA. The interval 25–27 is HBEAG; it reads GWL. Residues 165 to 214 are disordered; it reads NAPILSTLPETTVVRRRDRGRSPRRRTPSPRRRRSQSPRRRRSQSRESQC. The span at 178–207 shows a compositional bias: basic residues; it reads VRRRDRGRSPRRRTPSPRRRRSQSPRRRRS. The 1; half-length repeat unit spans residues 186–192; it reads SPRRRTP. Positions 186–208 are 3 X 8 AA repeats of S-P-R-R-R-R-S-Q; the sequence is SPRRRTPSPRRRRSQSPRRRRSQ. The propeptide occupies 186–214; it reads SPRRRTPSPRRRRSQSPRRRRSQSRESQC. A run of 2 repeats spans residues 193 to 200 and 201 to 208.

Belongs to the orthohepadnavirus precore antigen family. In terms of assembly, homodimerizes. In terms of processing, phosphorylated. Cleaved by host furin.

It localises to the secreted. Its subcellular location is the host nucleus. May regulate immune response to the intracellular capsid in acting as a T-cell tolerogen, by having an immunoregulatory effect which prevents destruction of infected cells by cytotoxic T-cells. This immune regulation may predispose to chronicity during perinatal infections and prevent severe liver injury during adult infections. The chain is External core antigen from Homo sapiens (Human).